The chain runs to 692 residues: Threonine--tRNA ligase (692 aa).

The 58-residue stretch at 2 to 59 (AEAHISITVNGEAKEVEASQTGVELFADDKNIIAVRLNGELRDLYTPLHDGDNVESVT) folds into the TGS domain. A catalytic region spans residues 255–561 (DHRKLGQEMD…LLEHYAGAFP (307 aa)). Cys360, His411, and His538 together coordinate Zn(2+).

It belongs to the class-II aminoacyl-tRNA synthetase family. In terms of assembly, homodimer. Zn(2+) serves as cofactor.

Its subcellular location is the cytoplasm. The catalysed reaction is tRNA(Thr) + L-threonine + ATP = L-threonyl-tRNA(Thr) + AMP + diphosphate + H(+). Catalyzes the attachment of threonine to tRNA(Thr) in a two-step reaction: L-threonine is first activated by ATP to form Thr-AMP and then transferred to the acceptor end of tRNA(Thr). Also edits incorrectly charged L-seryl-tRNA(Thr). The sequence is that of Threonine--tRNA ligase from Bifidobacterium animalis subsp. lactis (strain AD011).